The primary structure comprises 743 residues: Catalase-peroxidase (743 aa).

The tract at residues 1–22 is disordered; the sequence is MEKQSNDAAVAGAPNDHGAAKC. Residues 105–227 constitute a cross-link (tryptophyl-tyrosyl-methioninium (Trp-Tyr) (with M-253)); it reads WHSAGTYRIT…LGAVQMGLIY (123 aa). The active-site Proton acceptor is His106. A cross-link (tryptophyl-tyrosyl-methioninium (Tyr-Met) (with W-105)) is located at residues 227–253; sequence YVNPEGPNGNPDPVAAAKDIRETFFRM. Residue His268 participates in heme b binding.

It belongs to the peroxidase family. Peroxidase/catalase subfamily. As to quaternary structure, homodimer or homotetramer. Heme b serves as cofactor. In terms of processing, formation of the three residue Trp-Tyr-Met cross-link is important for the catalase, but not the peroxidase activity of the enzyme.

It carries out the reaction H2O2 + AH2 = A + 2 H2O. It catalyses the reaction 2 H2O2 = O2 + 2 H2O. In terms of biological role, bifunctional enzyme with both catalase and broad-spectrum peroxidase activity. This is Catalase-peroxidase from Solibacter usitatus (strain Ellin6076).